The primary structure comprises 702 residues: Polyribonucleotide nucleotidyltransferase (702 aa).

Residues aspartate 491 and aspartate 497 each coordinate Mg(2+). The KH domain maps to 558 to 618; it reads PKMKTFMIPV…TAIEKAYQLI (61 aa). The S1 motif domain maps to 628–696; that stretch reads GEKIIGPVVK…GKGKIKLQLI (69 aa).

Belongs to the polyribonucleotide nucleotidyltransferase family. Mg(2+) is required as a cofactor.

Its subcellular location is the cytoplasm. The catalysed reaction is RNA(n+1) + phosphate = RNA(n) + a ribonucleoside 5'-diphosphate. Involved in mRNA degradation. Catalyzes the phosphorolysis of single-stranded polyribonucleotides processively in the 3'- to 5'-direction. The polypeptide is Polyribonucleotide nucleotidyltransferase (Spiroplasma citri).